Reading from the N-terminus, the 223-residue chain is Dephospho-CoA kinase (223 aa).

One can recognise a DPCK domain in the interval 22-223 (LIGLSGPSCS…LLQEVKKRGF (202 aa)). 30-35 (CSGKNT) lines the ATP pocket.

Belongs to the CoaE family.

It localises to the cytoplasm. The catalysed reaction is 3'-dephospho-CoA + ATP = ADP + CoA + H(+). It participates in cofactor biosynthesis; coenzyme A biosynthesis; CoA from (R)-pantothenate: step 5/5. In terms of biological role, catalyzes the phosphorylation of the 3'-hydroxyl group of dephosphocoenzyme A to form coenzyme A. The chain is Dephospho-CoA kinase from Treponema denticola (strain ATCC 35405 / DSM 14222 / CIP 103919 / JCM 8153 / KCTC 15104).